The following is a 221-amino-acid chain: Ribosome maturation factor RimM (221 aa).

The interval 1–23 (MTERKQGAAAPRPLNRPQGESPK) is disordered. In terms of domain architecture, PRC barrel spans 144–221 (ENEFYWVDLI…RIVVDWGLDY (78 aa)).

Belongs to the RimM family. As to quaternary structure, binds ribosomal protein uS19.

It is found in the cytoplasm. In terms of biological role, an accessory protein needed during the final step in the assembly of 30S ribosomal subunit, possibly for assembly of the head region. Essential for efficient processing of 16S rRNA. May be needed both before and after RbfA during the maturation of 16S rRNA. It has affinity for free ribosomal 30S subunits but not for 70S ribosomes. The sequence is that of Ribosome maturation factor RimM from Cupriavidus pinatubonensis (strain JMP 134 / LMG 1197) (Cupriavidus necator (strain JMP 134)).